A 212-amino-acid polypeptide reads, in one-letter code: Thiamine-phosphate synthase (212 aa).

4-amino-2-methyl-5-(diphosphooxymethyl)pyrimidine contacts are provided by residues 39–43 (QLRIK) and asparagine 71. Residues aspartate 72 and aspartate 91 each coordinate Mg(2+). A 4-amino-2-methyl-5-(diphosphooxymethyl)pyrimidine-binding site is contributed by serine 110. 136–138 (TQT) lines the 2-[(2R,5Z)-2-carboxy-4-methylthiazol-5(2H)-ylidene]ethyl phosphate pocket. Lysine 139 lines the 4-amino-2-methyl-5-(diphosphooxymethyl)pyrimidine pocket. Residues glycine 168 and 188-189 (VS) contribute to the 2-[(2R,5Z)-2-carboxy-4-methylthiazol-5(2H)-ylidene]ethyl phosphate site.

It belongs to the thiamine-phosphate synthase family. The cofactor is Mg(2+).

It carries out the reaction 2-[(2R,5Z)-2-carboxy-4-methylthiazol-5(2H)-ylidene]ethyl phosphate + 4-amino-2-methyl-5-(diphosphooxymethyl)pyrimidine + 2 H(+) = thiamine phosphate + CO2 + diphosphate. The enzyme catalyses 2-(2-carboxy-4-methylthiazol-5-yl)ethyl phosphate + 4-amino-2-methyl-5-(diphosphooxymethyl)pyrimidine + 2 H(+) = thiamine phosphate + CO2 + diphosphate. It catalyses the reaction 4-methyl-5-(2-phosphooxyethyl)-thiazole + 4-amino-2-methyl-5-(diphosphooxymethyl)pyrimidine + H(+) = thiamine phosphate + diphosphate. It functions in the pathway cofactor biosynthesis; thiamine diphosphate biosynthesis; thiamine phosphate from 4-amino-2-methyl-5-diphosphomethylpyrimidine and 4-methyl-5-(2-phosphoethyl)-thiazole: step 1/1. Functionally, condenses 4-methyl-5-(beta-hydroxyethyl)thiazole monophosphate (THZ-P) and 2-methyl-4-amino-5-hydroxymethyl pyrimidine pyrophosphate (HMP-PP) to form thiamine monophosphate (TMP). The sequence is that of Thiamine-phosphate synthase from Serratia proteamaculans (strain 568).